We begin with the raw amino-acid sequence, 205 residues long: Holliday junction branch migration complex subunit RuvA (205 aa).

The domain I stretch occupies residues 1-64 (MIGRLRGIIL…EDAQLLFGFN (64 aa)). Residues 65–143 (DKQERALFRE…GLSGDLFNSV (79 aa)) are domain II. Positions 144 to 156 (SDIPLTSPANVDN) are flexible linker. The domain III stretch occupies residues 157–205 (RVGEPEAEAAAALVALGYKPQEASRMISKIARPDADCETLIRDALRAAL).

Belongs to the RuvA family. As to quaternary structure, homotetramer. Forms an RuvA(8)-RuvB(12)-Holliday junction (HJ) complex. HJ DNA is sandwiched between 2 RuvA tetramers; dsDNA enters through RuvA and exits via RuvB. An RuvB hexamer assembles on each DNA strand where it exits the tetramer. Each RuvB hexamer is contacted by two RuvA subunits (via domain III) on 2 adjacent RuvB subunits; this complex drives branch migration. In the full resolvosome a probable DNA-RuvA(4)-RuvB(12)-RuvC(2) complex forms which resolves the HJ.

It is found in the cytoplasm. Its function is as follows. The RuvA-RuvB-RuvC complex processes Holliday junction (HJ) DNA during genetic recombination and DNA repair, while the RuvA-RuvB complex plays an important role in the rescue of blocked DNA replication forks via replication fork reversal (RFR). RuvA specifically binds to HJ cruciform DNA, conferring on it an open structure. The RuvB hexamer acts as an ATP-dependent pump, pulling dsDNA into and through the RuvAB complex. HJ branch migration allows RuvC to scan DNA until it finds its consensus sequence, where it cleaves and resolves the cruciform DNA. The chain is Holliday junction branch migration complex subunit RuvA from Pectobacterium atrosepticum (strain SCRI 1043 / ATCC BAA-672) (Erwinia carotovora subsp. atroseptica).